A 213-amino-acid polypeptide reads, in one-letter code: Cysteine dioxygenase (213 aa).

His100, His102, and His160 together coordinate Fe cation. Positions 107–177 (CVMKVLKGSL…TNFAISLHLY (71 aa)) form a cross-link, 3'-(S-cysteinyl)-tyrosine (Cys-Tyr).

It belongs to the cysteine dioxygenase family. It depends on Fe cation as a cofactor. The thioether cross-link between Cys-107 and Tyr-177 plays a structural role through stabilizing the Fe(2+) ion, and prevents the production of highly damaging free hydroxyl radicals by holding the oxygen radical via hydroxyl hydrogen.

The catalysed reaction is L-cysteine + O2 = 3-sulfino-L-alanine + H(+). This is Cysteine dioxygenase (CDO1) from Ajellomyces capsulatus (strain G186AR / H82 / ATCC MYA-2454 / RMSCC 2432) (Darling's disease fungus).